The chain runs to 322 residues: Glycerate dehydrogenase (322 aa).

NAD(+) contacts are provided by residues 158-159 (SI), aspartate 178, 239-241 (TAR), and aspartate 265. Residue arginine 241 is part of the active site. Glutamate 270 is an active-site residue. Histidine 288 (proton donor) is an active-site residue. 288 to 291 (HIGS) is a binding site for NAD(+).

The protein belongs to the D-isomer specific 2-hydroxyacid dehydrogenase family. In terms of assembly, homodimer.

It carries out the reaction (R)-glycerate + NAD(+) = 3-hydroxypyruvate + NADH + H(+). Its pathway is one-carbon metabolism; formaldehyde assimilation via serine pathway. Active on hydroxypyruvate and glyoxylate. The polypeptide is Glycerate dehydrogenase (Hyphomicrobium methylovorum).